The following is a 434-amino-acid chain: Trigger factor (434 aa).

One can recognise a PPIase FKBP-type domain in the interval 161–246; the sequence is EDRATIDFSG…LKKVEERELP (86 aa).

The protein belongs to the FKBP-type PPIase family. Tig subfamily.

The protein localises to the cytoplasm. It carries out the reaction [protein]-peptidylproline (omega=180) = [protein]-peptidylproline (omega=0). Functionally, involved in protein export. Acts as a chaperone by maintaining the newly synthesized protein in an open conformation. Functions as a peptidyl-prolyl cis-trans isomerase. The sequence is that of Trigger factor from Erwinia tasmaniensis (strain DSM 17950 / CFBP 7177 / CIP 109463 / NCPPB 4357 / Et1/99).